A 2890-amino-acid chain; its full sequence is Bifunctional DNA-directed RNA polymerase subunit beta-beta' (2890 aa).

The segment at 1–1377 (MSKKIPLKNR…DINIFGDDVD (1377 aa)) is DNA-directed RNA polymerase subunit beta. The interval 1384–2890 (PIVIKEDDRP…LRTLEDDPKF (1507 aa)) is DNA-directed RNA polymerase subunit beta'. Zn(2+)-binding residues include Cys1449, Cys1451, Cys1465, and Cys1468. Mg(2+)-binding residues include Asp1849, Asp1851, and Asp1853. The Zn(2+) site is built by Cys2179, Cys2253, Cys2260, and Cys2263.

It in the N-terminal section; belongs to the RNA polymerase beta chain family. In the C-terminal section; belongs to the RNA polymerase beta' chain family. The RNAP catalytic core consists of 2 alpha, 1 beta/beta' and 1 omega subunit. When a sigma factor is associated with the core the holoenzyme is formed, which can initiate transcription. Mg(2+) is required as a cofactor. It depends on Zn(2+) as a cofactor.

It carries out the reaction RNA(n) + a ribonucleoside 5'-triphosphate = RNA(n+1) + diphosphate. DNA-dependent RNA polymerase catalyzes the transcription of DNA into RNA using the four ribonucleoside triphosphates as substrates. The protein is Bifunctional DNA-directed RNA polymerase subunit beta-beta' (rpoBC) of Helicobacter pylori (strain Shi470).